We begin with the raw amino-acid sequence, 237 residues long: MNEENAAENESSQPKPLSATARRCLGVLVEKAKTTPDGYPLSLAGLITGCNQKSNRSPQMQVDESDALLALDELRAAGAAREIQGSGRVTKYRHAAYEWLGVDSPGAAIVTELMLRGPQTAGELRTRASRMHKFPDLDSLKTELDSLIEKGLVESLTPPGRGQTFAHCLYTPQERLYLVDKIKKQDASSAAPSQAESGSTSPAKAANDDRIDKIQERLDSVTAKLEALEKRLEFLES.

The segment covering 187–202 (ASSAAPSQAESGSTSP) has biased composition (polar residues). The disordered stretch occupies residues 187–211 (ASSAAPSQAESGSTSPAKAANDDRI).

Belongs to the UPF0502 family.

This chain is UPF0502 protein RB6530, found in Rhodopirellula baltica (strain DSM 10527 / NCIMB 13988 / SH1).